The primary structure comprises 769 residues: MADDGMLLNFTFSDDVVKKSEPKLKGGTWRDRLSAKKIAQHRAQPRKPSDGTAAPRPVKNPNRIQVSGTRPAKRQRTDDDHDAGLRDHDRAGQSQHQHQHPRQFISSLFSKNPLPRNAEEPTDEAPAEDAKPTNAPLIDGLDTFTNLGLSPTLAAHLLTKLELKAPTAIQKASISQLLKEESDAFIQAETGSGKTLAYLLPLVQRIMALSHPTNRTDATSTTDAEGQPVVHRDSGLFAIVLAPTRELCKQISVVLEGLLRCAHWIVAGTVIGGEKKKSEKARLRKGLNILVATPGRLADHLENTQALDVSNVRWLVLDEGDRLMELGFEQELQGIIKKLDARQRPSRIPGVPTKRTTILCSATLKMNVQKLGEMSLKDAIHIKADPADEDGDAKPKNDDESAFTVPAQLKQSYAIVAAKLRLVTLTAFLKRTFMRKGSVMKAIVFVSCADSVDFHFEVFTRKLQDSDENAEDSDASDTKEKPAAFTHNTIARATAFSNPSNPVTLHRLHGSLPQHVRTSTLASFARNKDASVLVCTDVASRGLDLPNVDLVIEYDPAFSAEDHLHRIGRTARLGRDGRALIFLQPGCEEGYVEILKRGYRDGGKALTRTNADDILKRGFGGNVESENKDWEEKATDWQMDLERWALEKPESLEMARRAYQSHIRAYATHVASERSMFNIKELHLGHLAKAFALRDRPSKINVPGLRQGKDDTKKDYKAARAPAAGKKRKTPGGRDDDDIPAAADTASAAQKMRAKMKEHMAGASEFNLA.

The tract at residues M1–L137 is disordered. Composition is skewed to basic and acidic residues over residues D15–S34 and Q75–A91. The Q motif signature appears at D142–K171. The Helicase ATP-binding domain maps to S175–I382. Residue A188–T195 coordinates ATP. Positions D318–D321 match the DEAD box motif. The Helicase C-terminal domain occupies Q408–E631. Positions I700–A769 are disordered. Positions Q707–A718 are enriched in basic and acidic residues. Over residues P740 to A749 the composition is skewed to low complexity.

The protein belongs to the DEAD box helicase family. DDX31/DBP7 subfamily.

It localises to the nucleus. Its subcellular location is the nucleolus. The enzyme catalyses ATP + H2O = ADP + phosphate + H(+). ATP-binding RNA helicase involved in the biogenesis of 60S ribosomal subunits and is required for the normal formation of 25S and 5.8S rRNAs. The sequence is that of ATP-dependent RNA helicase dbp7 (dbp7) from Aspergillus terreus (strain NIH 2624 / FGSC A1156).